A 179-amino-acid polypeptide reads, in one-letter code: ATP synthase subunit delta (179 aa).

Belongs to the ATPase delta chain family. F-type ATPases have 2 components, F(1) - the catalytic core - and F(0) - the membrane proton channel. F(1) has five subunits: alpha(3), beta(3), gamma(1), delta(1), epsilon(1). F(0) has three main subunits: a(1), b(2) and c(10-14). The alpha and beta chains form an alternating ring which encloses part of the gamma chain. F(1) is attached to F(0) by a central stalk formed by the gamma and epsilon chains, while a peripheral stalk is formed by the delta and b chains.

It localises to the cell inner membrane. In terms of biological role, f(1)F(0) ATP synthase produces ATP from ADP in the presence of a proton or sodium gradient. F-type ATPases consist of two structural domains, F(1) containing the extramembraneous catalytic core and F(0) containing the membrane proton channel, linked together by a central stalk and a peripheral stalk. During catalysis, ATP synthesis in the catalytic domain of F(1) is coupled via a rotary mechanism of the central stalk subunits to proton translocation. Its function is as follows. This protein is part of the stalk that links CF(0) to CF(1). It either transmits conformational changes from CF(0) to CF(1) or is implicated in proton conduction. This is ATP synthase subunit delta from Burkholderia vietnamiensis (strain G4 / LMG 22486) (Burkholderia cepacia (strain R1808)).